The primary structure comprises 150 residues: MSDYKIWVDADACPNPIKEILFRAAERKALPLVLVANQMIRVPPSPYINQIRVGAGFDVADQYIVYHVEPTHLVITADIPLAALIIEKGALALNPRGELYTVDNIKQKLTMRDFMEDLRGSGVHTGGPDSFSQADKQAFANSLDKWLVRV.

This sequence belongs to the UPF0178 family.

The polypeptide is UPF0178 protein Sbal195_1808 (Shewanella baltica (strain OS195)).